A 733-amino-acid chain; its full sequence is MTSENPDVLLSRVINVVRAASSLASQDVDFYKNLDRGFSKDLKSKADKLADMANEIILSIDEHHESFELKEEDISDLWNNFGNIMDNLLEMSDHSLDKLNCAINSKSRGSDLQYLGEFSGKNFSPTKRVEKPQLKFKSPIDNSESHPFIPLLKEKPNALKPLSESLRLVDDDENNPSHYPHPYEYEIDHQEYSPEILQIREEIPSKSWDDSVPIWVDTSTELESMLEDLKNTKEIAVDLEHHDYRSYYGIVCLMQISTRERDYLVDTLKLRENLHILNEVFTNPSIVKVFHGAFMDIIWLQRDLGLYVVGLFDTYHASKAIGLPRHSLAYLLENFANFKTSKKYQLADWRIRPLSKPMTAYARADTHFLLNIYDQLRNKLIESNKLAGVLYESRNVAKRRFEYSKYRPLTPSSEVYSPIEKESPWKILMYQYNIPPEREVLVRELYQWRDLIARRDDESPRFVMPNQLLAALVAYTPTDVIGVVSLTNGVTEHVRQNAKLLANLIRDALRNIKNTNEEATPIPSSETKADGILLETISVPQIRDVMERFSVLCNSNISKSRAKPVTNSSILLGKILPREEHDIAYSKDGLPNKVKTEDIRIRAQNFKSALANLEDIIFEIEKPLVVPVKLEEIKTVDPASAPNHSPEIDNLDDLVVLKKKNIQKKQPAKEKGVTEKDAVDYSKIPNILSNKPGQNNRQQKKRRFDPSSSDSNGPRAAKKRRPAAKGKNLSFKR.

The residue at position 138 (serine 138) is a Phosphoserine. The region spanning 214 to 380 is the 3'-5' exonuclease domain; sequence IWVDTSTELE…NIYDQLRNKL (167 aa). The Mn(2+) site is built by aspartate 238 and glutamate 240. Zn(2+)-binding residues include aspartate 238 and glutamate 240. AMP-binding residues include glutamate 240 and histidine 241. 2 residues coordinate UMP: glutamate 240 and histidine 241. Aspartate 296 lines the Mn(2+) pocket. The AMP site is built by tryptophan 299, lysine 342, and glutamine 345. UMP is bound by residues tryptophan 299, lysine 342, and glutamine 345. Aspartate 365 provides a ligand contact to Mn(2+). Aspartate 365 is a Zn(2+) binding site. Positions 435–515 constitute an HRDC domain; it reads PPEREVLVRE…RDALRNIKNT (81 aa). Threonine 520 is modified (phosphothreonine). A phosphoserine mark is found at serine 640 and serine 645. The tract at residues 662 to 733 is disordered; it reads IQKKQPAKEK…AKGKNLSFKR (72 aa). The segment covering 667–680 has biased composition (basic and acidic residues); it reads PAKEKGVTEKDAVD. Polar residues predominate over residues 687-697; sequence ILSNKPGQNNR. Short sequence motifs (nuclear localization signal) lie at residues 700-704 and 718-721; these read KKRRF and KKRR. Over residues 716 to 733 the composition is skewed to basic residues; that stretch reads AAKKRRPAAKGKNLSFKR.

Belongs to the exosome component 10/RRP6 family. As to quaternary structure, component of the RNA exosome complex. Specifically part of the catalytically inactive RNA exosome core complex (Exo-9) which may associate with the catalytic subunits RRP6 and DIS3 in cytoplasmic- and nuclear-specific RNA exosome complex forms. Exo-9 is formed by a hexameric base ring of RNase PH domain-containing subunits and a cap ring consisting of CSL4, RRP4 and RRP40. RRP6 specifically is part of the nuclear form of the RNA exosome complex; the association appears to be mediated by Exo-9 and not by DIS3. Interacts with LRP1. Interacts with NPL3, NOP53 and PAP1.

The protein localises to the nucleus. Its subcellular location is the nucleolus. Nuclear-specific catalytic component of the RNA exosome complex which has 3'-&gt;5' exoribonuclease activity and participates in a multitude of cellular RNA processing and degradation events. In the nucleus, the RNA exosome complex is involved in proper maturation of stable RNA species such as rRNA, snRNA and snoRNA, in the elimination of RNA processing by-products and non-coding 'pervasive' transcripts, such as antisense RNA species and cryptic unstable transcripts (CUTs), and of mRNAs with processing defects, thereby limiting or excluding their export to the cytoplasm. The catalytic inactive RNA exosome core complex of 9 subunits (Exo-9) is proposed to play a pivotal role in the binding and presentation of RNA for ribonucleolysis, and to serve as a scaffold for the association with catalytic subunits and accessory proteins or complexes. RRP6 has 3'-5' exonuclease activity which is not modulated upon association with Exo-9 suggesting that the complex inner RNA-binding path is not used to access its active site. In Saccharomyces cerevisiae (strain ATCC 204508 / S288c) (Baker's yeast), this protein is Exosome complex exonuclease RRP6 (RRP6).